The chain runs to 508 residues: 2,3-bisphosphoglycerate-independent phosphoglycerate mutase (508 aa).

The Mn(2+) site is built by D13 and S63. Catalysis depends on S63, which acts as the Phosphoserine intermediate. Substrate-binding positions include H122, 152-153 (RD), R184, R190, 256-259 (RADR), and K330. Mn(2+) contacts are provided by D397, H401, D438, H439, and H457.

It belongs to the BPG-independent phosphoglycerate mutase family. Monomer. Mn(2+) is required as a cofactor.

The catalysed reaction is (2R)-2-phosphoglycerate = (2R)-3-phosphoglycerate. Its pathway is carbohydrate degradation; glycolysis; pyruvate from D-glyceraldehyde 3-phosphate: step 3/5. Catalyzes the interconversion of 2-phosphoglycerate and 3-phosphoglycerate. The sequence is that of 2,3-bisphosphoglycerate-independent phosphoglycerate mutase from Laribacter hongkongensis (strain HLHK9).